The sequence spans 151 residues: Ribosome maturation factor RimP (151 aa).

The protein belongs to the RimP family.

It localises to the cytoplasm. Functionally, required for maturation of 30S ribosomal subunits. The sequence is that of Ribosome maturation factor RimP from Thermoanaerobacter sp. (strain X514).